We begin with the raw amino-acid sequence, 446 residues long: N-succinylarginine dihydrolase (446 aa).

Substrate contacts are provided by residues 19 to 28 (AGLSFGNVAS), N110, and 137 to 138 (HR). E174 is an active-site residue. R213 contacts substrate. H249 is an active-site residue. Positions 251 and 364 each coordinate substrate. C370 (nucleophile) is an active-site residue.

The protein belongs to the succinylarginine dihydrolase family. In terms of assembly, homodimer.

The enzyme catalyses N(2)-succinyl-L-arginine + 2 H2O + 2 H(+) = N(2)-succinyl-L-ornithine + 2 NH4(+) + CO2. It functions in the pathway amino-acid degradation; L-arginine degradation via AST pathway; L-glutamate and succinate from L-arginine: step 2/5. In terms of biological role, catalyzes the hydrolysis of N(2)-succinylarginine into N(2)-succinylornithine, ammonia and CO(2). The chain is N-succinylarginine dihydrolase from Burkholderia ambifaria (strain MC40-6).